We begin with the raw amino-acid sequence, 507 residues long: Maturase K (507 aa).

Belongs to the intron maturase 2 family. MatK subfamily.

The protein localises to the plastid. It localises to the chloroplast. Usually encoded in the trnK tRNA gene intron. Probably assists in splicing its own and other chloroplast group II introns. In Cupaniopsis anacardioides (Carrotwood), this protein is Maturase K.